Reading from the N-terminus, the 430-residue chain is Glutamate-1-semialdehyde 2,1-aminomutase (430 aa).

Lys-267 carries the post-translational modification N6-(pyridoxal phosphate)lysine.

It belongs to the class-III pyridoxal-phosphate-dependent aminotransferase family. HemL subfamily. As to quaternary structure, homodimer. It depends on pyridoxal 5'-phosphate as a cofactor.

The protein resides in the cytoplasm. The catalysed reaction is (S)-4-amino-5-oxopentanoate = 5-aminolevulinate. The protein operates within porphyrin-containing compound metabolism; protoporphyrin-IX biosynthesis; 5-aminolevulinate from L-glutamyl-tRNA(Glu): step 2/2. The protein is Glutamate-1-semialdehyde 2,1-aminomutase of Anaeromyxobacter dehalogenans (strain 2CP-C).